The chain runs to 565 residues: Sulfite reductase [NADPH] hemoprotein beta-component (565 aa).

C429, C435, C474, and C478 together coordinate [4Fe-4S] cluster. Siroheme is bound at residue C478.

It belongs to the nitrite and sulfite reductase 4Fe-4S domain family. Alpha(8)-beta(8). The alpha component is a flavoprotein, the beta component is a hemoprotein. It depends on siroheme as a cofactor. The cofactor is [4Fe-4S] cluster.

The enzyme catalyses hydrogen sulfide + 3 NADP(+) + 3 H2O = sulfite + 3 NADPH + 4 H(+). It participates in sulfur metabolism; hydrogen sulfide biosynthesis; hydrogen sulfide from sulfite (NADPH route): step 1/1. In terms of biological role, component of the sulfite reductase complex that catalyzes the 6-electron reduction of sulfite to sulfide. This is one of several activities required for the biosynthesis of L-cysteine from sulfate. The polypeptide is Sulfite reductase [NADPH] hemoprotein beta-component (Shewanella baltica (strain OS185)).